The primary structure comprises 184 residues: Inosine triphosphate pyrophosphatase (184 aa).

9–14 is an ITP binding site; the sequence is TSNASK. Glu-38 lines the Mg(2+) pocket. Residues Lys-50, 66-67, Lys-83, 142-145, Lys-163, and 168-169 contribute to the ITP site; these read DT, FGWD, and HR.

It belongs to the HAM1 NTPase family. In terms of assembly, homodimer. It depends on Mg(2+) as a cofactor. Mn(2+) is required as a cofactor.

The protein localises to the cytoplasm. It is found in the nucleus. The catalysed reaction is ITP + H2O = IMP + diphosphate + H(+). The enzyme catalyses dITP + H2O = dIMP + diphosphate + H(+). It carries out the reaction XTP + H2O = XMP + diphosphate + H(+). Its function is as follows. Pyrophosphatase that hydrolyzes non-canonical purine nucleotides such as inosine triphosphate (ITP), deoxyinosine triphosphate (dITP) or xanthosine 5'-triphosphate (XTP) to their respective monophosphate derivatives. The enzyme does not distinguish between the deoxy- and ribose forms. Probably excludes non-canonical purines from RNA and DNA precursor pools, thus preventing their incorporation into RNA and DNA and avoiding chromosomal lesions. The protein is Inosine triphosphate pyrophosphatase of Tuber melanosporum (strain Mel28) (Perigord black truffle).